The primary structure comprises 79 residues: Cyclin-dependent kinases regulatory subunit 2 (79 aa).

Lys-4 is subject to N6-acetyllysine.

It belongs to the CKS family. As to quaternary structure, forms a homohexamer that can probably bind six kinase subunits.

Binds to the catalytic subunit of the cyclin dependent kinases and is essential for their biological function. In Mus musculus (Mouse), this protein is Cyclin-dependent kinases regulatory subunit 2 (Cks2).